The chain runs to 138 residues: Small ribosomal subunit protein uS11c (138 aa).

Residues 1-22 form a disordered region; the sequence is MAKPIPKIGSRKNARSGSRKHL. The segment covering 9–22 has biased composition (basic residues); that stretch reads GSRKNARSGSRKHL.

The protein belongs to the universal ribosomal protein uS11 family. In terms of assembly, part of the 30S ribosomal subunit.

It localises to the plastid. The protein localises to the chloroplast. This is Small ribosomal subunit protein uS11c from Lotus japonicus (Lotus corniculatus var. japonicus).